A 185-amino-acid chain; its full sequence is Ribosome-recycling factor (185 aa).

This sequence belongs to the RRF family.

The protein resides in the cytoplasm. In terms of biological role, responsible for the release of ribosomes from messenger RNA at the termination of protein biosynthesis. May increase the efficiency of translation by recycling ribosomes from one round of translation to another. The chain is Ribosome-recycling factor from Streptococcus pyogenes serotype M18 (strain MGAS8232).